We begin with the raw amino-acid sequence, 156 residues long: Endoribonuclease YbeY (156 aa).

Residues His-122, His-126, and His-132 each coordinate Zn(2+).

This sequence belongs to the endoribonuclease YbeY family. Zn(2+) serves as cofactor.

The protein resides in the cytoplasm. Functionally, single strand-specific metallo-endoribonuclease involved in late-stage 70S ribosome quality control and in maturation of the 3' terminus of the 16S rRNA. The chain is Endoribonuclease YbeY from Geobacillus kaustophilus (strain HTA426).